The primary structure comprises 122 residues: Basic phospholipase A2 Cdr-12 (122 aa).

Cystine bridges form between cysteine 26-cysteine 115, cysteine 28-cysteine 44, cysteine 43-cysteine 95, cysteine 49-cysteine 122, cysteine 50-cysteine 88, cysteine 57-cysteine 81, and cysteine 75-cysteine 86. 3 residues coordinate Ca(2+): tyrosine 27, glycine 29, and glycine 31. Residue histidine 47 is part of the active site. Aspartate 48 is a Ca(2+) binding site. Aspartate 89 is an active-site residue.

The cofactor is Ca(2+). In terms of tissue distribution, expressed by the venom gland.

Its subcellular location is the secreted. It carries out the reaction a 1,2-diacyl-sn-glycero-3-phosphocholine + H2O = a 1-acyl-sn-glycero-3-phosphocholine + a fatty acid + H(+). Its function is as follows. Snake venom phospholipase A2 (PLA2) that induces myonecrosis and edema upon intramuscular injections in mice. In vitro, causes a potent blockade of neuromuscular transmission in young chicken biventer cervicis preparation and produces cytotoxicity in murine C2C12 skeletal muscle myotubes and lack cytolytic activity upon myoblasts in vitro. PLA2 catalyzes the calcium-dependent hydrolysis of the 2-acyl groups in 3-sn-phosphoglycerides. The sequence is that of Basic phospholipase A2 Cdr-12 from Crotalus durissus ruruima (South American rattlesnake).